Here is a 234-residue protein sequence, read N- to C-terminus: Glucosamine-6-phosphate deaminase (234 aa).

Catalysis depends on Asp-62, which acts as the Proton acceptor; for enolization step. Asn-128 serves as the catalytic For ring-opening step. His-130 functions as the Proton acceptor; for ring-opening step in the catalytic mechanism. Catalysis depends on Glu-135, which acts as the For ring-opening step.

The protein belongs to the glucosamine/galactosamine-6-phosphate isomerase family. NagB subfamily.

It catalyses the reaction alpha-D-glucosamine 6-phosphate + H2O = beta-D-fructose 6-phosphate + NH4(+). Its pathway is amino-sugar metabolism; N-acetylneuraminate degradation; D-fructose 6-phosphate from N-acetylneuraminate: step 5/5. Functionally, catalyzes the reversible isomerization-deamination of glucosamine 6-phosphate (GlcN6P) to form fructose 6-phosphate (Fru6P) and ammonium ion. The chain is Glucosamine-6-phosphate deaminase from Streptococcus pyogenes serotype M1.